The following is a 492-amino-acid chain: 2-succinylbenzoate--CoA ligase (492 aa).

The protein belongs to the ATP-dependent AMP-binding enzyme family. MenE subfamily.

The enzyme catalyses 2-succinylbenzoate + ATP + CoA = 2-succinylbenzoyl-CoA + AMP + diphosphate. It functions in the pathway quinol/quinone metabolism; 1,4-dihydroxy-2-naphthoate biosynthesis; 1,4-dihydroxy-2-naphthoate from chorismate: step 5/7. It participates in quinol/quinone metabolism; menaquinone biosynthesis. Converts 2-succinylbenzoate (OSB) to 2-succinylbenzoyl-CoA (OSB-CoA). In Staphylococcus aureus (strain bovine RF122 / ET3-1), this protein is 2-succinylbenzoate--CoA ligase.